We begin with the raw amino-acid sequence, 241 residues long: Spiralin (241 aa).

An N-terminal signal peptide occupies residues 1–23 (MKKLLSILAVFGVSAVGTTSVVA). Cys-24 carries the N-palmitoyl cysteine lipid modification. Residue Cys-24 is the site of S-diacylglycerol cysteine attachment.

The protein belongs to the spiralin family. As to quaternary structure, seems to occur as dimer, tetramers, and large oligomers of identical chains. Post-translationally, palmitate and stearate are the major lipid components.

Its subcellular location is the cell membrane. Functionally, major membrane protein of spiroplasma. This Spiroplasma citri protein is Spiralin (spi).